The following is a 114-amino-acid chain: MPKFKQVKNLKIPGVEPPEKVCSDPNCPWHGTLRVRGVLLEGVVAKARARRMVVVQHVYLYYDKKYNRYERRSKKIHAHLPDCISVKEGDVVVIGETMPISKTVKFTVLGVKRR.

The protein belongs to the universal ribosomal protein uS17 family. In terms of assembly, part of the 30S ribosomal subunit.

In terms of biological role, one of the primary rRNA binding proteins, it binds specifically to the 5'-end of 16S ribosomal RNA. This Aeropyrum pernix (strain ATCC 700893 / DSM 11879 / JCM 9820 / NBRC 100138 / K1) protein is Small ribosomal subunit protein uS17.